Consider the following 190-residue polypeptide: Proline-rich protein 3 (190 aa).

3 disordered regions span residues 1–94, 110–130, and 142–161; these read MPKR…GLGP, PPFP…KEAR, and KNTY…SDRP. Residues 37–48 are compositionally biased toward pro residues; it reads MGPPSLLGPPPM. Residues 157–185 form a C3H1-type zinc finger; sequence KSDRPVCRHFSKKGHCRYEDHCAFYHPGV.

In Mus musculus (Mouse), this protein is Proline-rich protein 3 (Prr3).